We begin with the raw amino-acid sequence, 342 residues long: MNLSQDSSAHHQSQDYAGVSDDEDEIDILGEDDPCSPRSHIYQQPTDSDMGDRGVLSPSKLSCNESASHSSGERERGTSKHSLDTTTNGKVKRALVKPPYSYIALITIAIMQSPHKKLTLSGICDFISSKFPYYKDKFPAWQNSIRHNLSLNDCFIKIPREPGNPGKGNYWTLDPASKDMFDNGSFLRRRKRFKRQHQELFKDGLVMYNPLHYCTPNSALQAQQIPMTCLAIPENFAMPNHLVPYPDINITVPCPDQGVHRVLTAQDVDNHPSNSHSKCSFSIENIMGETKEPEKHLTSFNQNWNYNHLLQSSRLCLLPSGSHLANAHHSAQCNLIKFPGCY.

Residues 1–89 (MNLSQDSSAH…KHSLDTTTNG (89 aa)) are disordered. Acidic residues predominate over residues 20 to 34 (SDDEDEIDILGEDDP). Residues 59–70 (SKLSCNESASHS) show a composition bias toward polar residues. The span at 71 to 83 (SGERERGTSKHSL) shows a compositional bias: basic and acidic residues. Positions 97–191 (KPPYSYIALI…DNGSFLRRRK (95 aa)) form a DNA-binding region, fork-head.

As to expression, at the onset of gastrulation, expressed in the superficial layer of cells in the dorsal blastopore lip (Spemann organizer). In the open neural plate, expressed in a row of cells destined to become the floor plate of the neural tube. After neural tube closure, only detected in the tailtip and a small area located at the midbrain/hindbrain boundary.

It is found in the nucleus. Its function is as follows. Transcriptional repressor. In Xenopus laevis (African clawed frog), this protein is Forkhead box protein D5-C (foxd5-c).